A 105-amino-acid polypeptide reads, in one-letter code: Molt-inhibiting hormone (105 aa).

A signal peptide spans 1–28 (MYRLAMRTWLAIVIVVVGTSLLFDTASA). 3 disulfides stabilise this stretch: C35/C72, C52/C68, and C55/C81.

Belongs to the arthropod CHH/MIH/GIH/VIH hormone family. As to expression, produced by the medulla terminalis X-organ in the eyestalks and transported to the sinus gland where it is stored and released.

It is found in the secreted. In terms of biological role, inhibits Y-organs where molting hormone (ecdysteroid) is secreted. A molting cycle is initiated when MIH secretion diminishes or stops. Has little or no hyperglycemic activity. This is Molt-inhibiting hormone from Penaeus japonicus (Kuruma prawn).